The primary structure comprises 136 residues: NADPH-dependent 7-cyano-7-deazaguanine reductase (136 aa).

Catalysis depends on Cys-53, which acts as the Thioimide intermediate. Asp-60 acts as the Proton donor in catalysis. Residues 75–77 (VEL) and 94–95 (HE) each bind substrate.

It belongs to the GTP cyclohydrolase I family. QueF type 1 subfamily.

It is found in the cytoplasm. The catalysed reaction is 7-aminomethyl-7-carbaguanine + 2 NADP(+) = 7-cyano-7-deazaguanine + 2 NADPH + 3 H(+). The protein operates within tRNA modification; tRNA-queuosine biosynthesis. In terms of biological role, catalyzes the NADPH-dependent reduction of 7-cyano-7-deazaguanine (preQ0) to 7-aminomethyl-7-deazaguanine (preQ1). The polypeptide is NADPH-dependent 7-cyano-7-deazaguanine reductase (Nostoc sp. (strain PCC 7120 / SAG 25.82 / UTEX 2576)).